The primary structure comprises 1286 residues: Protein patched (1286 aa).

Residues methionine 1 to lysine 76 are Cytoplasmic-facing. Residues valine 77–leucine 92 traverse the membrane as a helical segment. Topologically, residues lysine 93 to proline 427 are extracellular. Residues asparagine 142, asparagine 298, asparagine 335, and asparagine 388 are each glycosylated (N-linked (GlcNAc...) asparagine). Residues serine 428–leucine 448 traverse the membrane as a helical segment. The region spanning serine 428 to leucine 583 is the SSD domain. The Cytoplasmic portion of the chain corresponds to arginine 449 to valine 465. The chain crosses the membrane as a helical span at residues leucine 466 to phenylalanine 486. Residues asparagine 487–glutamine 492 are Extracellular-facing. Residues valine 493–alanine 511 form a helical membrane-spanning segment. Topologically, residues alanine 512–serine 532 are cytoplasmic. The helical transmembrane segment at isoleucine 533 to proline 553 threads the bilayer. Residues alanine 554–alanine 562 are Extracellular-facing. A helical membrane pass occupies residues alanine 563–leucine 583. Over aspartate 584–serine 677 the chain is Cytoplasmic. A helical membrane pass occupies residues tryptophan 678–threonine 699. At arginine 700–glycine 931 the chain is on the extracellular side. Residue asparagine 807 is glycosylated (N-linked (GlcNAc...) asparagine). Residues phenylalanine 932–leucine 952 form a helical membrane-spanning segment. Over arginine 953–serine 955 the chain is Cytoplasmic. A helical transmembrane segment spans residues leucine 956–leucine 976. The Extracellular portion of the chain corresponds to serine 977–serine 1007. A helical membrane pass occupies residues alanine 1008–isoleucine 1028. The Cytoplasmic segment spans residues serine 1029–histidine 1056. Residues glycine 1057–isoleucine 1077 traverse the membrane as a helical segment. Residues arginine 1078–tryptophan 1082 are Extracellular-facing. The chain crosses the membrane as a helical span at residues leucine 1083–leucine 1103. The Cytoplasmic portion of the chain corresponds to serine 1104–serine 1286. A disordered region spans residues glutamate 1116 to proline 1237. Composition is skewed to polar residues over residues valine 1141 to glutamine 1152 and proline 1165 to threonine 1191. Residues proline 1199 to glutamine 1216 are compositionally biased toward low complexity. Residues proline 1224 to tyrosine 1235 are compositionally biased toward pro residues.

Belongs to the patched family. Interacts (via C-terminal cytoplasmic region) with CG5504/l(2)tid; the interaction is probably direct. Interacts with hh/hedgehog.

The protein localises to the membrane. Functionally, segmentation polarity protein. Acts as a receptor for the hedgehog protein (hh). Associates with the smoothened protein (SMO) to transduce the hedgehog signal leading to the activation of wingless, decapentaplegic and patched itself. Participates in cell interactions that establish pattern within the segment and the imaginal disks during development. In the absence of HH, represses the constitutive signaling activity of smo through fused (FU). The chain is Protein patched from Drosophila melanogaster (Fruit fly).